The sequence spans 202 residues: 3-isopropylmalate dehydratase small subunit 2 (202 aa).

This sequence belongs to the LeuD family. LeuD type 1 subfamily. Heterodimer of LeuC and LeuD.

The enzyme catalyses (2R,3S)-3-isopropylmalate = (2S)-2-isopropylmalate. It functions in the pathway amino-acid biosynthesis; L-leucine biosynthesis; L-leucine from 3-methyl-2-oxobutanoate: step 2/4. Functionally, catalyzes the isomerization between 2-isopropylmalate and 3-isopropylmalate, via the formation of 2-isopropylmaleate. The sequence is that of 3-isopropylmalate dehydratase small subunit 2 from Bordetella parapertussis (strain 12822 / ATCC BAA-587 / NCTC 13253).